Consider the following 457-residue polypeptide: Serine--tRNA ligase (457 aa).

Residue 252 to 254 (TAE) coordinates L-serine. ATP-binding positions include 283–285 (RKE) and valine 299. Position 306 (glutamate 306) interacts with L-serine. 370-373 (EMVS) is a binding site for ATP. Threonine 406 lines the L-serine pocket.

This sequence belongs to the class-II aminoacyl-tRNA synthetase family. Type-1 seryl-tRNA synthetase subfamily. Homodimer. The tRNA molecule binds across the dimer.

It localises to the cytoplasm. The enzyme catalyses tRNA(Ser) + L-serine + ATP = L-seryl-tRNA(Ser) + AMP + diphosphate + H(+). The catalysed reaction is tRNA(Sec) + L-serine + ATP = L-seryl-tRNA(Sec) + AMP + diphosphate + H(+). Its pathway is aminoacyl-tRNA biosynthesis; selenocysteinyl-tRNA(Sec) biosynthesis; L-seryl-tRNA(Sec) from L-serine and tRNA(Sec): step 1/1. Functionally, catalyzes the attachment of serine to tRNA(Ser). Is also able to aminoacylate tRNA(Sec) with serine, to form the misacylated tRNA L-seryl-tRNA(Sec), which will be further converted into selenocysteinyl-tRNA(Sec). This Saccharolobus islandicus (strain Y.N.15.51 / Yellowstone #2) (Sulfolobus islandicus) protein is Serine--tRNA ligase.